The sequence spans 388 residues: N5-carboxyaminoimidazole ribonucleotide synthase (388 aa).

Residues lysine 105, lysine 140, 174-177 (ESFV), glutamate 182, and 267-268 (NE) contribute to the ATP site. Residues 109 to 297 (RHFLQNLGLP…QFALQLQAVT (189 aa)) enclose the ATP-grasp domain.

Belongs to the PurK/PurT family. As to quaternary structure, homodimer.

It carries out the reaction 5-amino-1-(5-phospho-beta-D-ribosyl)imidazole + hydrogencarbonate + ATP = 5-carboxyamino-1-(5-phospho-D-ribosyl)imidazole + ADP + phosphate + 2 H(+). It participates in purine metabolism; IMP biosynthesis via de novo pathway; 5-amino-1-(5-phospho-D-ribosyl)imidazole-4-carboxylate from 5-amino-1-(5-phospho-D-ribosyl)imidazole (N5-CAIR route): step 1/2. Catalyzes the ATP-dependent conversion of 5-aminoimidazole ribonucleotide (AIR) and HCO(3)(-) to N5-carboxyaminoimidazole ribonucleotide (N5-CAIR). The protein is N5-carboxyaminoimidazole ribonucleotide synthase of Synechocystis sp. (strain ATCC 27184 / PCC 6803 / Kazusa).